Reading from the N-terminus, the 210-residue chain is Protein-L-isoaspartate O-methyltransferase (210 aa).

Residue Ser59 is part of the active site.

It belongs to the methyltransferase superfamily. L-isoaspartyl/D-aspartyl protein methyltransferase family.

Its subcellular location is the cytoplasm. The enzyme catalyses [protein]-L-isoaspartate + S-adenosyl-L-methionine = [protein]-L-isoaspartate alpha-methyl ester + S-adenosyl-L-homocysteine. Catalyzes the methyl esterification of L-isoaspartyl residues in peptides and proteins that result from spontaneous decomposition of normal L-aspartyl and L-asparaginyl residues. It plays a role in the repair and/or degradation of damaged proteins. The polypeptide is Protein-L-isoaspartate O-methyltransferase (Nitratidesulfovibrio vulgaris (strain ATCC 29579 / DSM 644 / CCUG 34227 / NCIMB 8303 / VKM B-1760 / Hildenborough) (Desulfovibrio vulgaris)).